A 242-amino-acid chain; its full sequence is 3-dehydroquinate dehydratase (242 aa).

3-dehydroquinate-binding positions include 39 to 41 and Arg-73; that span reads EIR. The active-site Proton donor/acceptor is the His-135. Lys-162 acts as the Schiff-base intermediate with substrate in catalysis. 3-dehydroquinate-binding residues include Arg-203 and Gln-228.

Belongs to the type-I 3-dehydroquinase family. Homodimer.

The catalysed reaction is 3-dehydroquinate = 3-dehydroshikimate + H2O. The protein operates within metabolic intermediate biosynthesis; chorismate biosynthesis; chorismate from D-erythrose 4-phosphate and phosphoenolpyruvate: step 3/7. In terms of biological role, involved in the third step of the chorismate pathway, which leads to the biosynthesis of aromatic amino acids. Catalyzes the cis-dehydration of 3-dehydroquinate (DHQ) and introduces the first double bond of the aromatic ring to yield 3-dehydroshikimate. The chain is 3-dehydroquinate dehydratase from Methanosarcina barkeri (strain Fusaro / DSM 804).